The following is a 307-amino-acid chain: Putative serine/threonine-protein phosphatase C22H10.04 (307 aa).

Residues Asp-51, His-53, Asp-79, and Asn-111 each coordinate Mn(2+). Catalysis depends on His-112, which acts as the Proton donor. Mn(2+) contacts are provided by His-161 and His-236.

This sequence belongs to the PPP phosphatase family. PP-X subfamily. Mn(2+) serves as cofactor.

The enzyme catalyses O-phospho-L-seryl-[protein] + H2O = L-seryl-[protein] + phosphate. The catalysed reaction is O-phospho-L-threonyl-[protein] + H2O = L-threonyl-[protein] + phosphate. The polypeptide is Putative serine/threonine-protein phosphatase C22H10.04 (Schizosaccharomyces pombe (strain 972 / ATCC 24843) (Fission yeast)).